Here is a 179-residue protein sequence, read N- to C-terminus: Large ribosomal subunit protein uL6 (179 aa).

The protein belongs to the universal ribosomal protein uL6 family. In terms of assembly, part of the 50S ribosomal subunit.

Its function is as follows. This protein binds to the 23S rRNA, and is important in its secondary structure. It is located near the subunit interface in the base of the L7/L12 stalk, and near the tRNA binding site of the peptidyltransferase center. The chain is Large ribosomal subunit protein uL6 from Acidobacterium capsulatum (strain ATCC 51196 / DSM 11244 / BCRC 80197 / JCM 7670 / NBRC 15755 / NCIMB 13165 / 161).